The chain runs to 413 residues: MIAEILATGNEVLSGTIADTNAAHIAQILEAAGIEVRRHTCVGDDLDHIAAAVTEICARADVLLVTGGLGPTGDDLTTAAVARAAKKKLVLDPDAEHSMKTYFVQRKRSMQPSDAKQAMLPEGAQCIVNDIGTAPGFMLAMGHCHVFVMPGVPHEMKQMLETGVMPRIETLQGGGRLYAASRTLTVFGLPESTVGERMAGFGAALPGMRYGIRVRFPEIFIKVSTRQPDSRTAQDLAGQACQWVKKQVGESVFSDAGLALEAEVGRLLVSAKATVAVAESCTGGLIADLLTGVPGSSDYFLFSGVTYANQAKVDVLGVSPQTIETHGAVSEETVKEMADGVRRVAGATFGLATSGIAGPSGGTKEKPVGTVCIGLAGPDGVQTSHVCLSFQNRSMNKRLFAFLALETLRRKLL.

This sequence belongs to the CinA family.

This Desulfosudis oleivorans (strain DSM 6200 / JCM 39069 / Hxd3) (Desulfococcus oleovorans) protein is CinA-like protein.